A 142-amino-acid chain; its full sequence is Small ribosomal subunit protein uS9 (142 aa).

Residues 117-142 (KGDPRRTEHKKPGIKHARSKRQKAYR) form a disordered region. Residues 123–142 (TEHKKPGIKHARSKRQKAYR) show a composition bias toward basic residues.

Belongs to the universal ribosomal protein uS9 family.

The polypeptide is Small ribosomal subunit protein uS9 (Pyrobaculum aerophilum (strain ATCC 51768 / DSM 7523 / JCM 9630 / CIP 104966 / NBRC 100827 / IM2)).